Here is a 126-residue protein sequence, read N- to C-terminus: Histone H2B.5 (126 aa).

A compositionally biased stretch (basic and acidic residues) spans 1 to 27 (MAPKAEKKPSEKAPKADKKITKEGGSE). Positions 1 to 34 (MAPKAEKKPSEKAPKADKKITKEGGSERKKKTKK) are disordered. Ala2 is subject to N,N,N-trimethylalanine; alternate. Ala2 carries the post-translational modification N,N-dimethylalanine; alternate. Residue Ala2 is modified to N-methylalanine; alternate. An N6-methyllysine modification is found at Lys4. An N6-acetyllysine mark is found at Lys7, Lys12, Lys18, and Lys19. A Glycyl lysine isopeptide (Lys-Gly) (interchain with G-Cter in ubiquitin) cross-link involves residue Lys122.

The protein belongs to the histone H2B family. As to quaternary structure, the nucleosome is a histone octamer containing two molecules each of H2A, H2B, H3 and H4 assembled in one H3-H4 heterotetramer and two H2A-H2B heterodimers. The octamer wraps approximately 147 bp of DNA. In terms of processing, can be acetylated to form H2BK6ac, H2BK33ac and H2BK34ac. Monoubiquitinated by BRE1 to form H2BK143ub1 and deubiquitinated by UBP26. Required for heterochromatic histone H3 di- and trimethylation at H3K4me. May give a specific tag for epigenetic transcriptional activation.

The protein localises to the nucleus. The protein resides in the chromosome. Core component of nucleosome. Nucleosomes wrap and compact DNA into chromatin, limiting DNA accessibility to the cellular machineries which require DNA as a template. Histones thereby play a central role in transcription regulation, DNA repair, DNA replication and chromosomal stability. DNA accessibility is regulated via a complex set of post-translational modifications of histones, also called histone code, and nucleosome remodeling. This Arabidopsis thaliana (Mouse-ear cress) protein is Histone H2B.5.